Here is a 59-residue protein sequence, read N- to C-terminus: Large ribosomal subunit protein uL30 (59 aa).

Belongs to the universal ribosomal protein uL30 family. As to quaternary structure, part of the 50S ribosomal subunit.

In Buchnera aphidicola subsp. Acyrthosiphon kondoi (Acyrthosiphon kondoi symbiotic bacterium), this protein is Large ribosomal subunit protein uL30.